Consider the following 350-residue polypeptide: UDP-N-acetylenolpyruvoylglucosamine reductase (350 aa).

The FAD-binding PCMH-type domain maps to 24-195 (HVEATARWLL…VAVEFNLPLL (172 aa)). Arginine 172 is an active-site residue. Residue serine 245 is the Proton donor of the active site. Glutamate 342 is an active-site residue.

Belongs to the MurB family. FAD serves as cofactor.

It localises to the cytoplasm. It catalyses the reaction UDP-N-acetyl-alpha-D-muramate + NADP(+) = UDP-N-acetyl-3-O-(1-carboxyvinyl)-alpha-D-glucosamine + NADPH + H(+). The protein operates within cell wall biogenesis; peptidoglycan biosynthesis. Functionally, cell wall formation. The protein is UDP-N-acetylenolpyruvoylglucosamine reductase of Xanthomonas oryzae pv. oryzae (strain MAFF 311018).